The following is a 192-amino-acid chain: Large ribosomal subunit protein uL3 (192 aa).

It belongs to the universal ribosomal protein uL3 family. In terms of assembly, part of the 50S ribosomal subunit. Forms a cluster with proteins L14 and L19.

One of the primary rRNA binding proteins, it binds directly near the 3'-end of the 23S rRNA, where it nucleates assembly of the 50S subunit. The protein is Large ribosomal subunit protein uL3 (rplC) of Helicobacter hepaticus (strain ATCC 51449 / 3B1).